The primary structure comprises 743 residues: Beta-galactosidase (743 aa).

The active-site Proton donor is Glu388. The Nucleophile role is filled by Glu453.

The protein belongs to the glycosyl hydrolase 2 family. In terms of assembly, homodimer.

It carries out the reaction Hydrolysis of terminal non-reducing beta-D-galactose residues in beta-D-galactosides.. Its function is as follows. Beta-galactosidase. In Thermoanaerobacter pseudethanolicus (strain ATCC 33223 / 39E) (Clostridium thermohydrosulfuricum), this protein is Beta-galactosidase (lacZ).